An 82-amino-acid polypeptide reads, in one-letter code: Hydrogenase maturation factor HybG (82 aa).

This sequence belongs to the HupF/HypC family.

It functions in the pathway protein modification; [NiFe] hydrogenase maturation. Involved in the maturation of [NiFe] hydrogenases. Involved in the biosynthesis of the Fe(CN)(2)CO cofactor. HybG delivers iron-bound CO(2) to HypD where reduction to CO probably occurs. In complex with HypD, accepts the cyanide ligand generated by HypF and HypE, and also coordinates the carbon monoxide ligand. In Escherichia coli O157:H7, this protein is Hydrogenase maturation factor HybG (hybG).